The following is a 461-amino-acid chain: Bifunctional protein GlmU (461 aa).

A pyrophosphorylase region spans residues 1 to 227 (MEVIALILAA…PDEVLGVNDR (227 aa)). UDP-N-acetyl-alpha-D-glucosamine contacts are provided by residues 8-11 (LAAG), lysine 22, glutamine 73, 78-79 (GT), 100-102 (YGD), glycine 137, glutamate 152, asparagine 167, and asparagine 225. Aspartate 102 contributes to the Mg(2+) binding site. Position 225 (asparagine 225) interacts with Mg(2+). Positions 228 to 248 (RQLAELERIYQVHQARALMER) are linker. An N-acetyltransferase region spans residues 249-461 (GVTLRDPARF…EKARKESCAE (213 aa)). UDP-N-acetyl-alpha-D-glucosamine-binding residues include arginine 332 and lysine 350. Histidine 362 serves as the catalytic Proton acceptor. 2 residues coordinate UDP-N-acetyl-alpha-D-glucosamine: tyrosine 365 and asparagine 376. Residues alanine 379, 385-386 (NY), serine 404, alanine 422, and arginine 439 contribute to the acetyl-CoA site.

It in the N-terminal section; belongs to the N-acetylglucosamine-1-phosphate uridyltransferase family. This sequence in the C-terminal section; belongs to the transferase hexapeptide repeat family. As to quaternary structure, homotrimer. Mg(2+) serves as cofactor.

Its subcellular location is the cytoplasm. The enzyme catalyses alpha-D-glucosamine 1-phosphate + acetyl-CoA = N-acetyl-alpha-D-glucosamine 1-phosphate + CoA + H(+). It carries out the reaction N-acetyl-alpha-D-glucosamine 1-phosphate + UTP + H(+) = UDP-N-acetyl-alpha-D-glucosamine + diphosphate. The protein operates within nucleotide-sugar biosynthesis; UDP-N-acetyl-alpha-D-glucosamine biosynthesis; N-acetyl-alpha-D-glucosamine 1-phosphate from alpha-D-glucosamine 6-phosphate (route II): step 2/2. Its pathway is nucleotide-sugar biosynthesis; UDP-N-acetyl-alpha-D-glucosamine biosynthesis; UDP-N-acetyl-alpha-D-glucosamine from N-acetyl-alpha-D-glucosamine 1-phosphate: step 1/1. It participates in bacterial outer membrane biogenesis; LPS lipid A biosynthesis. Catalyzes the last two sequential reactions in the de novo biosynthetic pathway for UDP-N-acetylglucosamine (UDP-GlcNAc). The C-terminal domain catalyzes the transfer of acetyl group from acetyl coenzyme A to glucosamine-1-phosphate (GlcN-1-P) to produce N-acetylglucosamine-1-phosphate (GlcNAc-1-P), which is converted into UDP-GlcNAc by the transfer of uridine 5-monophosphate (from uridine 5-triphosphate), a reaction catalyzed by the N-terminal domain. This is Bifunctional protein GlmU from Methylococcus capsulatus (strain ATCC 33009 / NCIMB 11132 / Bath).